A 553-amino-acid chain; its full sequence is Sensitive to high expression protein 9 homolog, mitochondrial (553 aa).

The tract at residues 61–174 (FFSTQPPKDT…TAQPELPSRT (114 aa)) is disordered. A compositionally biased stretch (polar residues) spans 62-84 (FSTQPPKDTPENMNNKETGSSNV). The span at 103 to 116 (AKEDTTDATNKSET) shows a compositional bias: basic and acidic residues. The span at 133 to 160 (SDVSSASTSDSANSSETTTTTSETTPEN) shows a compositional bias: low complexity. Coiled-coil stretches lie at residues 210 to 241 (SAIEQIKRKNAELEVAHGQAQSRLRDARHNYK) and 277 to 309 (RLDHELEAQVAQAAQELTEAETEESRLSADLNA). A helical membrane pass occupies residues 331-351 (WGTWGLMGVNVLLFLVLQFVA). The Mitochondrial intermembrane portion of the chain corresponds to 352-523 (EPWRRKRLMK…RIDLKMRDVS (172 aa)). 2 disordered regions span residues 408–428 (ALASTSSSSGDPQGGGGRTEG) and 443–497 (AEEA…QTLS). Low complexity-rich tracts occupy residues 443–473 (AEEAAEEAATAQQQQQQQQQQQQQQHHQTPE) and 484–495 (TWKQTAQKWQQT). A helical transmembrane segment spans residues 524 to 544 (LLALESAATGAAVVASVAFFV). The Mitochondrial matrix portion of the chain corresponds to 545–553 (LRSSGSGKA).

This sequence belongs to the SHE9 family. In terms of assembly, homooligomer.

It localises to the mitochondrion inner membrane. Functionally, required for the maintenance of the structure of the mitochondrial inner membrane. Involved in mitochondrial morphology. Causes growth arrest when highly overexpressed. The protein is Sensitive to high expression protein 9 homolog, mitochondrial (she-9) of Neurospora crassa (strain ATCC 24698 / 74-OR23-1A / CBS 708.71 / DSM 1257 / FGSC 987).